Here is a 233-residue protein sequence, read N- to C-terminus: Chaperone protein MrkB (233 aa).

A signal peptide spans 1–18 (MKRIALFFCFIFSFAAHA).

Belongs to the periplasmic pilus chaperone family.

It is found in the periplasm. Its function is as follows. Mediates assembly of pili by forming soluble multimeric complexes with pili subunits as an intermediate step in the assembly process. This protein is involved in type 3 pili assembly. This Klebsiella pneumoniae protein is Chaperone protein MrkB (mrkB).